The primary structure comprises 289 residues: Acetyl-coenzyme A carboxylase carboxyl transferase subunit beta (289 aa).

The CoA carboxyltransferase N-terminal domain maps to 36 to 289; it reads MWLRCPHCHQ…LLKTGSVANE (254 aa). Zn(2+)-binding residues include C40, C43, C58, and C61. Residues 40–61 form a C4-type zinc finger; it reads CPHCHQLLFAKQLTQYAVCPNC.

This sequence belongs to the AccD/PCCB family. As to quaternary structure, acetyl-CoA carboxylase is a heterohexamer composed of biotin carboxyl carrier protein (AccB), biotin carboxylase (AccC) and two subunits each of ACCase subunit alpha (AccA) and ACCase subunit beta (AccD). Requires Zn(2+) as cofactor.

Its subcellular location is the cytoplasm. It carries out the reaction N(6)-carboxybiotinyl-L-lysyl-[protein] + acetyl-CoA = N(6)-biotinyl-L-lysyl-[protein] + malonyl-CoA. It functions in the pathway lipid metabolism; malonyl-CoA biosynthesis; malonyl-CoA from acetyl-CoA: step 1/1. Its function is as follows. Component of the acetyl coenzyme A carboxylase (ACC) complex. Biotin carboxylase (BC) catalyzes the carboxylation of biotin on its carrier protein (BCCP) and then the CO(2) group is transferred by the transcarboxylase to acetyl-CoA to form malonyl-CoA. The sequence is that of Acetyl-coenzyme A carboxylase carboxyl transferase subunit beta from Limosilactobacillus reuteri subsp. reuteri (strain JCM 1112) (Lactobacillus reuteri).